The following is a 436-amino-acid chain: MQVLQGAEARAALTRTFSQIPVPDAVLSRIEQTFGERLTPEQVVERILLDVRARGDDALRDWTERLDGPRPAELEVPAAELEAAQVAPELHAAIRLAAERVRAFYRQQPAHGFLEHGPDGALGQLVRPLGRVGVYVPGGLAPLISTLMHTAVPAQVAGVPDIVVTTPPGKDGQVHPAILVAARELGLSRVFKVGGAQAIAALAYGTASVPAVDKIAGPGNLFVVIAKRLVYGQTGIESLPGPTETLVVADDSASPRYVAADLLAQAEHNGAEPVLVSVSRELLLAVQAELNEQLENLPEPNRSWARDSVGARMKVVLADSLDEALDLANLYAPEHLCLLTRDPWSLLGQVRRAGGVFVGEASMEALGDYVAGPSHVMPTGGTARFMSPVNVRDFQNIISVVGVNEETLRRIGPAAATLARAEGLEAHARAVESRLK.

Residues Tyr135, Gln197, and Asn220 each contribute to the NAD(+) site. Residues Thr243, Gln265, and His268 each contribute to the substrate site. Zn(2+)-binding residues include Gln265 and His268. Residues Glu334 and His335 each act as proton acceptor in the active site. His335, Asp368, Glu422, and His427 together coordinate substrate. Asp368 is a binding site for Zn(2+). His427 contacts Zn(2+).

This sequence belongs to the histidinol dehydrogenase family. The cofactor is Zn(2+).

It carries out the reaction L-histidinol + 2 NAD(+) + H2O = L-histidine + 2 NADH + 3 H(+). It functions in the pathway amino-acid biosynthesis; L-histidine biosynthesis; L-histidine from 5-phospho-alpha-D-ribose 1-diphosphate: step 9/9. Functionally, catalyzes the sequential NAD-dependent oxidations of L-histidinol to L-histidinaldehyde and then to L-histidine. This chain is Histidinol dehydrogenase, found in Deinococcus radiodurans (strain ATCC 13939 / DSM 20539 / JCM 16871 / CCUG 27074 / LMG 4051 / NBRC 15346 / NCIMB 9279 / VKM B-1422 / R1).